The following is a 143-amino-acid chain: Small ribosomal subunit protein uS11c (143 aa).

Belongs to the universal ribosomal protein uS11 family. As to quaternary structure, part of the 30S ribosomal subunit.

It is found in the plastid. Its subcellular location is the chloroplast. The chain is Small ribosomal subunit protein uS11c from Hordeum vulgare (Barley).